Reading from the N-terminus, the 235-residue chain is 15,16-dihydrobiliverdin:ferredoxin oxidoreductase (235 aa).

Belongs to the HY2 family.

It carries out the reaction 15,16-dihydrobiliverdin + oxidized 2[4Fe-4S]-[ferredoxin] = biliverdin IXalpha + reduced 2[4Fe-4S]-[ferredoxin] + 2 H(+). Functionally, catalyzes the two-electron reduction of biliverdin IX-alpha at the C15 methine bridge. This chain is 15,16-dihydrobiliverdin:ferredoxin oxidoreductase, found in Synechococcus sp. (strain CC9605).